Consider the following 239-residue polypeptide: Sugar fermentation stimulation protein homolog (239 aa).

Belongs to the SfsA family.

The polypeptide is Sugar fermentation stimulation protein homolog (Synechococcus sp. (strain JA-3-3Ab) (Cyanobacteria bacterium Yellowstone A-Prime)).